The chain runs to 392 residues: O-phospho-L-seryl-tRNA:Cys-tRNA synthase 1 (392 aa).

Residues 85 to 86, Asn190, and 213 to 215 contribute to the pyridoxal 5'-phosphate site; these read AR and SGH. Lys216 bears the N6-(pyridoxal phosphate)lysine mark.

It belongs to the SepCysS family. Homodimer. Interacts with SepRS. Pyridoxal 5'-phosphate is required as a cofactor.

The enzyme catalyses O-phospho-L-seryl-tRNA(Cys) + hydrogen sulfide + H(+) = L-cysteinyl-tRNA(Cys) + phosphate. Functionally, converts O-phospho-L-seryl-tRNA(Cys) (Sep-tRNA(Cys)) to L-cysteinyl-tRNA(Cys) (Cys-tRNA(Cys)). The sequence is that of O-phospho-L-seryl-tRNA:Cys-tRNA synthase 1 from Methanoregula boonei (strain DSM 21154 / JCM 14090 / 6A8).